We begin with the raw amino-acid sequence, 354 residues long: Fructose-bisphosphate aldolase 2 (354 aa).

Serine 50 is a binding site for D-glyceraldehyde 3-phosphate. Aspartate 83 functions as the Proton donor in the catalytic mechanism. Zn(2+) contacts are provided by histidine 84, aspartate 105, glutamate 142, and histidine 198. Glycine 199 lines the dihydroxyacetone phosphate pocket. Histidine 232 contributes to the Zn(2+) binding site. Residues 233–235 (GSS) and 275–278 (NIDT) contribute to the dihydroxyacetone phosphate site.

It belongs to the class II fructose-bisphosphate aldolase family. As to quaternary structure, homodimer. Zn(2+) is required as a cofactor.

The catalysed reaction is beta-D-fructose 1,6-bisphosphate = D-glyceraldehyde 3-phosphate + dihydroxyacetone phosphate. Its pathway is carbohydrate biosynthesis; Calvin cycle. It functions in the pathway carbohydrate degradation; glycolysis; D-glyceraldehyde 3-phosphate and glycerone phosphate from D-glucose: step 4/4. Catalyzes the aldol condensation of dihydroxyacetone phosphate (DHAP or glycerone-phosphate) with glyceraldehyde 3-phosphate (G3P) to form fructose 1,6-bisphosphate (FBP) in gluconeogenesis and the reverse reaction in glycolysis. This Cereibacter sphaeroides (Rhodobacter sphaeroides) protein is Fructose-bisphosphate aldolase 2 (cfxB).